Here is a 214-residue protein sequence, read N- to C-terminus: Octanoyltransferase (214 aa).

Residues 32–207 enclose the BPL/LPL catalytic domain; the sequence is EDTLDEIWLV…NLLALLNHPP (176 aa). Substrate contacts are provided by residues 71-78, 138-140, and 151-153; these read RGGQVTYH, SLG, and GLA. Cys-169 acts as the Acyl-thioester intermediate in catalysis.

The protein belongs to the LipB family.

The protein resides in the cytoplasm. It catalyses the reaction octanoyl-[ACP] + L-lysyl-[protein] = N(6)-octanoyl-L-lysyl-[protein] + holo-[ACP] + H(+). It functions in the pathway protein modification; protein lipoylation via endogenous pathway; protein N(6)-(lipoyl)lysine from octanoyl-[acyl-carrier-protein]: step 1/2. Functionally, catalyzes the transfer of endogenously produced octanoic acid from octanoyl-acyl-carrier-protein onto the lipoyl domains of lipoate-dependent enzymes. Lipoyl-ACP can also act as a substrate although octanoyl-ACP is likely to be the physiological substrate. The polypeptide is Octanoyltransferase (Klebsiella pneumoniae subsp. pneumoniae (strain ATCC 700721 / MGH 78578)).